The primary structure comprises 449 residues: MMEKHGGKVTSDRRAGRRQHGQRCSASDAAPLVVVVILIVGALFLILGPTGSSSFTVPRIRVVFNEPVHVAVAAPPPPPPPAQMQAGANASSEEDSGLPPPRQLTDPPYSLGRTILGYDARRSAWLAAHPEFPARVAPAGRPRVLVVTGSAPARCPDPDGDHLLLRAFKNKVDYCRIHGLDVFYNTAFLDAEMSGFWAKLPLLRMLMVAHPEAELIWWVDSDAVFTDMLFEIPWERYAVHNLVLHGWEAKVFDEKSWIGVNTGSFLIRNCQWSLDLLDAWAPMGPRGPVRDRYGELFAEELSGRPPFEADDQSALIYLLVTQRQRWGDKVFIESSYDLNGFWEGIVDRYEELRRAGRDDGRWPFVTHFVGCKPCRRYADSYPAERCRRGMERAFNFADDQILKLYGFAHESLNTTAVRRVRNETGEPLDAGDEELGRLLHPTFRAARPT.

Basic and acidic residues predominate over residues 1-14 (MMEKHGGKVTSDRR). The segment at 1–24 (MMEKHGGKVTSDRRAGRRQHGQRC) is disordered. Residues 1-28 (MMEKHGGKVTSDRRAGRRQHGQRCSASD) are Cytoplasmic-facing. Residues 29–49 (AAPLVVVVILIVGALFLILGP) form a helical; Signal-anchor for type II membrane protein membrane-spanning segment. At 50-449 (TGSSSFTVPR…HPTFRAARPT (400 aa)) the chain is on the lumenal side. Residues 74-109 (APPPPPPPAQMQAGANASSEEDSGLPPPRQLTDPPY) are disordered. Asn89, Asn413, and Asn422 each carry an N-linked (GlcNAc...) asparagine glycan.

This sequence belongs to the glycosyltransferase 34 family.

It localises to the golgi apparatus membrane. Functionally, probable glycosyltransferase that may be involved in the biosynthesis of xyloglucan. The sequence is that of Probable glycosyltransferase 5 from Oryza sativa subsp. indica (Rice).